We begin with the raw amino-acid sequence, 207 residues long: Probable glutathione S-transferase 5 (207 aa).

The 80-residue stretch at 2 to 81 folds into the GST N-terminal domain; sequence VSYKLTYFNG…FLAREFKLNG (80 aa). Residues Y8, W39, K43, 51 to 53, and 65 to 66 contribute to the glutathione site; these read GQL and QS. In terms of domain architecture, GST C-terminal spans 83–207; the sequence is TAWEEAQVNS…WIETRPVTPF (125 aa).

The protein belongs to the GST superfamily. Sigma family.

It catalyses the reaction RX + glutathione = an S-substituted glutathione + a halide anion + H(+). Conjugation of reduced glutathione to a wide number of exogenous and endogenous hydrophobic electrophiles. May play a role in the detoxification of reactive oxygen species produced during pathogenic bacterial infection. In Caenorhabditis elegans, this protein is Probable glutathione S-transferase 5 (gst-5).